The chain runs to 767 residues: MAPLFLLLLLLLSPSPTSAHRFAYSAPNRPEVRTTTGSVRGLLIPAGPSGSTAAAFLGIPFAVPPLGPLRFRPPLPIPTPWTGIRDADSQPFACYQMVDTTFPGFQGSEMWNPNREMSEDCLYLNVWTQKGDPTEPPVLVWIYGGGFTGGSVSLDVYDGRYLAAAEEAVVVSMNYRVGSLGFLALAGHRDAPGNVGLWDQRLALQWVRDNAEAFGGDPDLITLFGESAGAASVGFHLLSPHSKGLFRRAVLQSGSPNGPWATIGAAEGRRRAAALGRAVGCPYGNETEFLGCLRGKEAADVLEGEGVVMPPQSVFRFAFVPVVDGDFVVDSPDVALWGDYGVKGGEGGHGVEGGDGGYGVKGGDGVKGGYGGGYGARGVREGDGDGGYGVKEGLREGYGVKEGYGVEGDGANAYGARVPPRPHRDETPPDAYGAKGSADAYGAKAAPRPHRDETSPDAYGAKMPPRPHRDEASPDTYGAKMPPRPHRDETSPDAYGAKMPPRPHRAGGEVEVLLGAVRVEGSYFLVYGVPGFGKDNESLISREEFLGGVRMGVPQATELAAEAVVLHYTDWLDADNPVKNREALDDIVGDHNVVCPLMAFAQRWAQRGGKVYAYLFDHRSSTLLWPSWMGVPHGYEIEFVFGLPLEPRNNYTREEVELSRRIMRYWGNFARTGDPNGGVGGPRWPPYTPSGQRYAHLNARPLSVGHGLRTQICAFWTRFLPKLLNATGPPEDAEREWRLEFHRWSSYMGRWRTQFEHYSRQQPCATL.

Residues 1–19 (MAPLFLLLLLLLSPSPTSA) form the signal peptide. Cys-94 and Cys-121 are oxidised to a cystine. The active-site Acyl-ester intermediate is the Ser-227. A disulfide bond links Cys-281 and Cys-292. The N-linked (GlcNAc...) asparagine glycan is linked to Asn-285. Positions 401 to 504 (KEGYGVEGDG…YGAKMPPRPH (104 aa)) are disordered. Glu-520 serves as the catalytic Charge relay system. N-linked (GlcNAc...) asparagine glycosylation occurs at Asn-536. A disulfide bridge links Cys-595 with Cys-713. His-633 functions as the Charge relay system in the catalytic mechanism. Residues Asn-650 and Asn-725 are each glycosylated (N-linked (GlcNAc...) asparagine).

This sequence belongs to the type-B carboxylesterase/lipase family. In terms of assembly, oligomer composed of disulfide-linked homodimers.

Its subcellular location is the synapse. The protein resides in the secreted. It is found in the cell membrane. The enzyme catalyses acetylcholine + H2O = choline + acetate + H(+). Its function is as follows. Terminates signal transduction at the neuromuscular junction by rapid hydrolysis of the acetylcholine released into the synaptic cleft. The sequence is that of Acetylcholinesterase (ACHE) from Gallus gallus (Chicken).